The following is a 463-amino-acid chain: L-seryl-tRNA(Sec) selenium transferase (463 aa).

Lys295 carries the N6-(pyridoxal phosphate)lysine modification.

The protein belongs to the SelA family. Homodecamer; pentamer of dimers. Binds only one seryl-tRNA(Sec) per dimer. The cofactor is pyridoxal 5'-phosphate.

Its subcellular location is the cytoplasm. The catalysed reaction is L-seryl-tRNA(Sec) + selenophosphate + H(+) = L-selenocysteinyl-tRNA(Sec) + phosphate. It functions in the pathway aminoacyl-tRNA biosynthesis; selenocysteinyl-tRNA(Sec) biosynthesis; selenocysteinyl-tRNA(Sec) from L-seryl-tRNA(Sec) (bacterial route): step 1/1. Converts seryl-tRNA(Sec) to selenocysteinyl-tRNA(Sec) required for selenoprotein biosynthesis. This Shigella flexneri protein is L-seryl-tRNA(Sec) selenium transferase.